The following is a 321-amino-acid chain: MMDSNRPNTYKAAVVQAASDPTSSLVSAQKAAALIEKAAGAGARLVVFPEAFIGGYPKGNSFGAPVGMRKPEGREAFRLYWEAAIDLDGVEVETIAAAAAATGAFTVIGCIEREQGTLYCTALFFDGARGLVGKHRKLMPTAGERLIWGFGDGSTMPVFETSLGNIGAVICWENYMPMLRMHMYSQGISIYCAPTADDRDTWLPTMQHIALEGRCFVLTACQHLKRGAFPADYECALGADPETVLMRGGSAIVNPLGKVLAGPCFEGETILYADIALDEVTRGKFDFDAAGHYSRPDVFQLVVDDRPKRAVSTVSAVRARN.

Residues 10-277 (YKAAVVQAAS…ETILYADIAL (268 aa)) form the CN hydrolase domain. The Proton acceptor role is filled by Glu50. Catalysis depends on Lys137, which acts as the Proton donor. The active-site Nucleophile is Cys171.

This sequence belongs to the carbon-nitrogen hydrolase superfamily. Nitrilase family. Homodecamer.

The catalysed reaction is an aliphatic nitrile + 2 H2O = a carboxylate + NH4(+). In terms of biological role, nitrilase that acts on various kinds of nitrile compounds such as aliphatic and aromatic nitriles. Has higher activity toward aliphatic nitriles compared to aromatic nitriles. Among the different substrates tested, has the highest activity toward hydrocinnamonitrile. The chain is Nitrilase blr3397 from Bradyrhizobium diazoefficiens (strain JCM 10833 / BCRC 13528 / IAM 13628 / NBRC 14792 / USDA 110).